We begin with the raw amino-acid sequence, 387 residues long: Gamma-butyrobetaine dioxygenase (387 aa).

The Zn(2+) site is built by cysteine 38, cysteine 40, cysteine 43, and histidine 82. The Fe cation site is built by histidine 202, aspartate 204, and histidine 347. A Phosphoserine modification is found at serine 351.

Belongs to the gamma-BBH/TMLD family. Requires Fe(2+) as cofactor. It depends on L-ascorbate as a cofactor. As to expression, highly expressed in kidney; moderately expressed in liver; very low expression in brain.

It is found in the cytoplasm. The catalysed reaction is 4-(trimethylamino)butanoate + 2-oxoglutarate + O2 = carnitine + succinate + CO2. It participates in amine and polyamine biosynthesis; carnitine biosynthesis. Functionally, catalyzes the formation of L-carnitine from gamma-butyrobetaine. The protein is Gamma-butyrobetaine dioxygenase (BBOX1) of Homo sapiens (Human).